A 181-amino-acid polypeptide reads, in one-letter code: UPF0302 protein LMOf2365_1950 (181 aa).

Belongs to the UPF0302 family.

This chain is UPF0302 protein LMOf2365_1950, found in Listeria monocytogenes serotype 4b (strain F2365).